A 359-amino-acid polypeptide reads, in one-letter code: MNITKDVSRLGQSLWLDNLSRDLLRDGALAKMIAEDGVSGVTSNPSIFQNALATSPHYADDLARLRREEADVERRYEALVIPDIRDACDLLLPLFERSAGNDGYVSLEVAPRLAYDTSGTVDEARRLWSLVDRPNLLVKVPGTPEGVDAFETLTQLGINVNVTLLFSIAQAQAVFDAYVRGLGKRAASGADLRRAKAVASLFLSRVDTAVDAELAGIGTQESLSLRGKAAVAMAKLAYQAYLETFRGPAFTALAARGARPQFLLWASTGVKNPDYHDLLYVEPLIGRETINTLPDKTLAALRDHGQPVPQLEQAVDEASAQLAEFARLGVDLDAVAARLQDAGVKQFETSYQALLAQIG.

Residue Lys-139 is the Schiff-base intermediate with substrate of the active site.

This sequence belongs to the transaldolase family. Type 2 subfamily.

It is found in the cytoplasm. It catalyses the reaction D-sedoheptulose 7-phosphate + D-glyceraldehyde 3-phosphate = D-erythrose 4-phosphate + beta-D-fructose 6-phosphate. Its pathway is carbohydrate degradation; pentose phosphate pathway; D-glyceraldehyde 3-phosphate and beta-D-fructose 6-phosphate from D-ribose 5-phosphate and D-xylulose 5-phosphate (non-oxidative stage): step 2/3. Transaldolase is important for the balance of metabolites in the pentose-phosphate pathway. This chain is Transaldolase, found in Thiobacillus denitrificans (strain ATCC 25259 / T1).